The primary structure comprises 138 residues: MAKPIQRIGSRRNGPIGSRKNGRRIPKGVIHVQASFNNTIVTVTDVRGRVVSWSSAGACGFRGTRRGTPFAAQTAAGNAIRTVVDQGMQRAEVMIKGPGLGRDAALRAIRRSGILLSFVRDVTPMPHNGCRPPKKRRV.

The segment at 1 to 23 (MAKPIQRIGSRRNGPIGSRKNGR) is disordered.

It belongs to the universal ribosomal protein uS11 family. As to quaternary structure, part of the 30S ribosomal subunit.

Its subcellular location is the plastid. It is found in the chloroplast. The chain is Small ribosomal subunit protein uS11c from Platanus occidentalis (Sycamore).